Here is a 163-residue protein sequence, read N- to C-terminus: Glutathione peroxidase 2 (163 aa).

Residue C36 is part of the active site.

This sequence belongs to the glutathione peroxidase family.

It localises to the cytoplasm. The enzyme catalyses 2 glutathione + H2O2 = glutathione disulfide + 2 H2O. In terms of biological role, may constitute a glutathione peroxidase-like protective system against oxidative stresses. This chain is Glutathione peroxidase 2 (gpx-2), found in Caenorhabditis elegans.